The primary structure comprises 156 residues: dCTP deaminase (156 aa).

DCTP-binding positions include 79–84 (RSSLAR), Asp-95, Gln-124, and Tyr-138.

It belongs to the dCTP deaminase family. Homotrimer.

It carries out the reaction dCTP + H2O + H(+) = dUTP + NH4(+). It functions in the pathway pyrimidine metabolism; dUMP biosynthesis; dUMP from dCTP (dUTP route): step 1/2. Its function is as follows. Catalyzes the deamination of dCTP to dUTP. This Pyrococcus horikoshii (strain ATCC 700860 / DSM 12428 / JCM 9974 / NBRC 100139 / OT-3) protein is dCTP deaminase.